Reading from the N-terminus, the 371-residue chain is Maltose/maltodextrin import ATP-binding protein MalK (371 aa).

The ABC transporter domain occupies 4-234 (VQLQNVTKAW…PADRFVAGFI (231 aa)). An ATP-binding site is contributed by 36-43 (GPSGCGKS).

It belongs to the ABC transporter superfamily. Maltooligosaccharide importer (TC 3.A.1.1.1) family. In terms of assembly, the complex is composed of two ATP-binding proteins (MalK), two transmembrane proteins (MalG and MalK) and a solute-binding protein (MalE).

Its subcellular location is the cell inner membrane. It catalyses the reaction D-maltose(out) + ATP + H2O = D-maltose(in) + ADP + phosphate + H(+). Part of the ABC transporter complex MalEFGK involved in maltose/maltodextrin import. Responsible for energy coupling to the transport system. This chain is Maltose/maltodextrin import ATP-binding protein MalK, found in Escherichia coli O6:H1 (strain CFT073 / ATCC 700928 / UPEC).